The chain runs to 100 residues: Cell division topological specificity factor (100 aa).

Belongs to the MinE family.

Its function is as follows. Prevents the cell division inhibition by proteins MinC and MinD at internal division sites while permitting inhibition at polar sites. This ensures cell division at the proper site by restricting the formation of a division septum at the midpoint of the long axis of the cell. The polypeptide is Cell division topological specificity factor (Synechococcus sp. (strain JA-2-3B'a(2-13)) (Cyanobacteria bacterium Yellowstone B-Prime)).